A 428-amino-acid polypeptide reads, in one-letter code: 5'-deoxyadenosine deaminase (428 aa).

The Zn(2+) site is built by H59 and H61. E88 and H180 together coordinate substrate. H207 is a Zn(2+) binding site. Substrate-binding residues include E210 and D296. D296 is a Zn(2+) binding site.

It belongs to the metallo-dependent hydrolases superfamily. MTA/SAH deaminase family. As to quaternary structure, homotetramer. Zn(2+) is required as a cofactor.

It catalyses the reaction 5'-deoxyadenosine + H2O + H(+) = 5'-deoxyinosine + NH4(+). The catalysed reaction is S-adenosyl-L-homocysteine + H2O + H(+) = S-inosyl-L-homocysteine + NH4(+). The enzyme catalyses S-methyl-5'-thioadenosine + H2O + H(+) = S-methyl-5'-thioinosine + NH4(+). It carries out the reaction adenosine + H2O + H(+) = inosine + NH4(+). The protein operates within amino-acid biosynthesis; S-adenosyl-L-methionine biosynthesis. Its function is as follows. Catalyzes the deamination of three SAM-derived enzymatic products, namely 5'-deoxyadenosine, S-adenosyl-L-homocysteine, and 5'-methylthioadenosine, to produce the inosine analogs. Can also deaminate adenosine. The preferred substrate for this enzyme is 5'-deoxyadenosine, but all these substrates are efficiently deaminated. Likely functions in a S-adenosyl-L-methionine (SAM) recycling pathway from S-adenosyl-L-homocysteine (SAH) produced from SAM-dependent methylation reactions. May also be involved in the recycling of 5'-deoxyadenosine, whereupon the 5'-deoxyribose moiety of 5'-deoxyinosine is further metabolized to deoxyhexoses used for the biosynthesis of aromatic amino acids in methanogens. This is 5'-deoxyadenosine deaminase from Methanococcus aeolicus (strain ATCC BAA-1280 / DSM 17508 / OCM 812 / Nankai-3).